The primary structure comprises 115 residues: NADH-ubiquinone oxidoreductase chain 3 (115 aa).

3 consecutive transmembrane segments (helical) span residues 3–23 (LLLTLLTNTTLALLLVFIAFW), 55–75 (FFLVAITFLLFDLEIALLLPL), and 84–104 (LNTMLTMALFLISLLAASLAY).

This sequence belongs to the complex I subunit 3 family. Core subunit of respiratory chain NADH dehydrogenase (Complex I) which is composed of 45 different subunits. Interacts with TMEM186. Interacts with TMEM242.

The protein resides in the mitochondrion inner membrane. The enzyme catalyses a ubiquinone + NADH + 5 H(+)(in) = a ubiquinol + NAD(+) + 4 H(+)(out). Its function is as follows. Core subunit of the mitochondrial membrane respiratory chain NADH dehydrogenase (Complex I) which catalyzes electron transfer from NADH through the respiratory chain, using ubiquinone as an electron acceptor. Essential for the catalytic activity of complex I. This chain is NADH-ubiquinone oxidoreductase chain 3, found in Balaenoptera musculus (Blue whale).